The sequence spans 576 residues: Cyclic nucleotide-binding domain-containing protein 2 (576 aa).

An a nucleoside 3',5'-cyclic phosphate-binding site is contributed by 116-239 (SYRNYAEPLQ…DAQYRFEFFR (124 aa)).

The protein resides in the cytoplasm. It is found in the cytosol. Its function is as follows. Essential for male fertility. Plays an important role in spermatogenesis and regulates sperm motility by controlling the development of the flagellar bending of sperm. This chain is Cyclic nucleotide-binding domain-containing protein 2 (CNBD2), found in Homo sapiens (Human).